A 157-amino-acid chain; its full sequence is Ribosome maturation factor RimP (157 aa).

This sequence belongs to the RimP family.

It localises to the cytoplasm. Required for maturation of 30S ribosomal subunits. In Synechococcus sp. (strain CC9311), this protein is Ribosome maturation factor RimP.